Reading from the N-terminus, the 167-residue chain is Large ribosomal subunit protein uL10 (167 aa).

The protein belongs to the universal ribosomal protein uL10 family. In terms of assembly, part of the ribosomal stalk of the 50S ribosomal subunit. The N-terminus interacts with L11 and the large rRNA to form the base of the stalk. The C-terminus forms an elongated spine to which L12 dimers bind in a sequential fashion forming a multimeric L10(L12)X complex.

Forms part of the ribosomal stalk, playing a central role in the interaction of the ribosome with GTP-bound translation factors. This chain is Large ribosomal subunit protein uL10, found in Latilactobacillus sakei subsp. sakei (strain 23K) (Lactobacillus sakei subsp. sakei).